Here is a 60-residue protein sequence, read N- to C-terminus: Large ribosomal subunit protein uL30 (60 aa).

The protein belongs to the universal ribosomal protein uL30 family. In terms of assembly, part of the 50S ribosomal subunit.

In Streptococcus uberis (strain ATCC BAA-854 / 0140J), this protein is Large ribosomal subunit protein uL30.